Reading from the N-terminus, the 231-residue chain is Chlorophyll a-b binding protein 1B-20, chloroplastic (231 aa).

The tract at residues 1 to 25 is disordered; the sequence is RIQAYRFRTRVPPSPAASGSPRSTR. The N-terminal 31 residues, 1 to 31, are a transit peptide targeting the chloroplast; the sequence is RIQAYRFRTRVPPSPAASGSPRSTRRDVAVQ. W36 contacts chlorophyll b. F56 contacts chlorophyll a. Residues R80, S118, E133, and R136 each contribute to the chlorophyll b site. Positions 182, 183, 186, 188, 200, and 215 each coordinate chlorophyll a. The chain crosses the membrane as a helical span at residues 183–199; that stretch reads ELANGRLAMLAFLGFLV.

This sequence belongs to the light-harvesting chlorophyll a/b-binding (LHC) protein family. As to quaternary structure, the LHC complex consists of chlorophyll a-b binding proteins. The cofactor is Binds at least 14 chlorophylls (8 Chl-a and 6 Chl-b) and carotenoids such as lutein and neoxanthin.. Photoregulated by reversible phosphorylation of its threonine residues.

It is found in the plastid. It localises to the chloroplast thylakoid membrane. In terms of biological role, the light-harvesting complex (LHC) functions as a light receptor, it captures and delivers excitation energy to photosystems with which it is closely associated. The chain is Chlorophyll a-b binding protein 1B-20, chloroplastic (LHC Ib-20) from Hordeum vulgare (Barley).